Reading from the N-terminus, the 145-residue chain is MTKKYLKVDVVSPLGSVFKGEADMVSLRGSAGEMGIAYGHTELLSTLPAGVVNVRKDQHTDVLYVSGGIVEVTPTRVTIMVDDMERAENLNQAEAEKARARAKEVLKNPDASKLDIEAANKRLKEADARLKALNSSNGLYYSKDD.

The protein belongs to the ATPase epsilon chain family. As to quaternary structure, F-type ATPases have 2 components, CF(1) - the catalytic core - and CF(0) - the membrane proton channel. CF(1) has five subunits: alpha(3), beta(3), gamma(1), delta(1), epsilon(1). CF(0) has three main subunits: a, b and c.

It is found in the cell inner membrane. Its function is as follows. Produces ATP from ADP in the presence of a proton gradient across the membrane. The polypeptide is ATP synthase epsilon chain (Francisella tularensis subsp. tularensis (strain FSC 198)).